The following is a 311-amino-acid chain: Glycosyltransferase 6 domain-containing protein 1 (311 aa).

Over 1 to 5 (MKAKR) the chain is Cytoplasmic. Residues 6–26 (RILLQLLTFCLFLLLLAKIHF) traverse the membrane as a helical; Signal-anchor for type II membrane protein segment. Over 27–311 (RNHQEEELLL…KIAHHPIDTL (285 aa)) the chain is Lumenal. A glycan (N-linked (GlcNAc...) asparagine) is linked at N77. Substrate contacts are provided by residues 85 to 90 (FAVGSL), 176 to 178 (NIN), and 198 to 201 (HPWW). E266 serves as the catalytic Nucleophile.

Belongs to the glycosyltransferase 6 family. The cofactor is Mn(2+).

It is found in the membrane. The chain is Glycosyltransferase 6 domain-containing protein 1 (Glt6d1) from Mus musculus (Mouse).